The following is a 625-amino-acid chain: Baeyer-Villiger monooxygenase ATR8 (625 aa).

Residues Asp-112, 120-123 (TWYW), Asp-132, and Tyr-138 contribute to the FAD site. Residue 130–132 (QCD) coordinates NADP(+). Residues 266 to 272 (TGATAIQ), 289 to 290 (RT), and 405 to 406 (KR) each bind NADP(+).

This sequence belongs to the FAD-binding monooxygenase family. The cofactor is FAD.

It participates in mycotoxin biosynthesis. Functionally, baeyer-Villiger monooxygenase; part of the core atranone cluster (CAC) which products are predicted to catalyze most or all steps of mycotoxin atranone synthesis, starting from geranylgeranyl pyrophosphate (GGPP). The initial cyclization of GGPP to dolabellane is probably performed by the terpene cyclase ATR13. The Baeyer-Villiger oxidation near the end of the atranone synthesis, which converts atranones D and E to atranones F and G is predicted to be catalyzed by the monooxygenase ATR8. Of the CAC's other predicted gene products, the reducing PKS ATR6 might synthesize a polyketide chain. This polyketide is probably transferred onto the atranone backbone by the polyketide transferase ATR5. Other predicted CAC products include 4 oxygenases (ATR2, ATR3, ATR4, and ATR14), 3 short-chain reductases (ATR7, ATR9, and ATR10), and a methyltransferase (ATR12). These may all be involved in the various steps of atranone biosynthesis, although their specific roles must await experimental determination. This is Baeyer-Villiger monooxygenase ATR8 from Stachybotrys chlorohalonatus (strain IBT 40285).